The primary structure comprises 464 residues: Type I restriction enzyme EcoKI specificity subunit (464 aa).

The protein belongs to the type-I restriction system S methylase family. In terms of assembly, the type I restriction/modification system is composed of three polypeptides R, M and S. The restriction enzyme has stoichiometry R(2)M(2)S(1). The methyltransferase is composed of M(2)S(1). (Microbial infection) Interacts with Escherichia phage T7 protein Ocr; this interaction leads to the inhibition of the methyltransferase restriction enzyme M.EcoKI composed of M(2)S(1).

The specificity (S) subunit of a type I restriction enzyme; this subunit dictates DNA sequence specificity. The M and S subunits together form a methyltransferase (MTase) that methylates A-2 on the top and A-3 on the bottom strand of the sequence 5'-AACN(6)GTGC-3'. In the presence of the R subunit the complex can also act as an endonuclease, binding to the same target sequence but cutting the DNA some distance from this site. Whether the DNA is cut or modified depends on the methylation state of the target sequence. When the target site is unmodified, the DNA is cut. When the target site is hemimethylated, the complex acts as a maintenance MTase modifying the DNA so that both strands become methylated. After locating a non-methylated recognition site, the enzyme complex serves as a molecular motor that translocates DNA in an ATP-dependent manner until a collision occurs that triggers cleavage. In Escherichia coli (strain K12), this protein is Type I restriction enzyme EcoKI specificity subunit.